The sequence spans 238 residues: Urease subunit alpha (238 aa).

Positions 1 to 102 (MKLTPKELDK…LVTVHTPIEA (102 aa)) are urease gamma. The urease beta stretch occupies residues 103–238 (NGKLVPGELF…DDNYVKTIKE (136 aa)).

This sequence in the N-terminal section; belongs to the urease gamma subunit family. The protein in the C-terminal section; belongs to the urease beta subunit family. As to quaternary structure, heterohexamer of 3 UreA (alpha) and 3 UreB (beta) subunits. Four heterohexamers assemble to form a 16 nm dodecameric complex.

The enzyme catalyses urea + 2 H2O + H(+) = hydrogencarbonate + 2 NH4(+). Its pathway is nitrogen metabolism; urea degradation; CO(2) and NH(3) from urea (urease route): step 1/1. The chain is Urease subunit alpha from Helicobacter pylori (strain J99 / ATCC 700824) (Campylobacter pylori J99).